We begin with the raw amino-acid sequence, 157 residues long: 2-C-methyl-D-erythritol 2,4-cyclodiphosphate synthase (157 aa).

A divalent metal cation is bound by residues aspartate 8 and histidine 10. Residues 8-10 (DVH) and 34-35 (HS) each bind 4-CDP-2-C-methyl-D-erythritol 2-phosphate. Histidine 42 is a binding site for a divalent metal cation. 4-CDP-2-C-methyl-D-erythritol 2-phosphate contacts are provided by residues 56–58 (DIG), 61–65 (FPDTD), 100–106 (AQKPKMA), 132–135 (TTTE), and phenylalanine 139.

The protein belongs to the IspF family. In terms of assembly, homotrimer. A divalent metal cation serves as cofactor.

It carries out the reaction 4-CDP-2-C-methyl-D-erythritol 2-phosphate = 2-C-methyl-D-erythritol 2,4-cyclic diphosphate + CMP. It participates in isoprenoid biosynthesis; isopentenyl diphosphate biosynthesis via DXP pathway; isopentenyl diphosphate from 1-deoxy-D-xylulose 5-phosphate: step 4/6. Functionally, involved in the biosynthesis of isopentenyl diphosphate (IPP) and dimethylallyl diphosphate (DMAPP), two major building blocks of isoprenoid compounds. Catalyzes the conversion of 4-diphosphocytidyl-2-C-methyl-D-erythritol 2-phosphate (CDP-ME2P) to 2-C-methyl-D-erythritol 2,4-cyclodiphosphate (ME-CPP) with a corresponding release of cytidine 5-monophosphate (CMP). This is 2-C-methyl-D-erythritol 2,4-cyclodiphosphate synthase from Alkaliphilus oremlandii (strain OhILAs) (Clostridium oremlandii (strain OhILAs)).